The sequence spans 228 residues: Cytidylate kinase (228 aa).

17–25 (GPTASGKGT) provides a ligand contact to ATP.

It belongs to the cytidylate kinase family. Type 1 subfamily.

It localises to the cytoplasm. The enzyme catalyses CMP + ATP = CDP + ADP. It carries out the reaction dCMP + ATP = dCDP + ADP. The sequence is that of Cytidylate kinase from Burkholderia ambifaria (strain ATCC BAA-244 / DSM 16087 / CCUG 44356 / LMG 19182 / AMMD) (Burkholderia cepacia (strain AMMD)).